The primary structure comprises 340 residues: Probable D,D-dipeptide transport system permease protein DdpB (340 aa).

Topologically, residues 1 to 11 (MTFWSILRQRC) are periplasmic. Residues 12 to 32 (WGLVLVVAGVCVITFIISHLI) form a helical membrane-spanning segment. At 33–104 (PGDPARLLAG…IFFPATLELA (72 aa)) the chain is on the cytoplasmic side. Positions 97–327 (FPATLELAFG…LVNLVVDLLY (231 aa)) constitute an ABC transmembrane type-1 domain. Residues 105 to 125 (FGALLLALLIGIPLGILSAVW) traverse the membrane as a helical segment. The Periplasmic portion of the chain corresponds to 126 to 135 (RNRWLDHLVR). A helical transmembrane segment spans residues 136–156 (IMAITGISTPAFWLGLGVIVL). At 157-199 (FYGHLQILPGGGRLDDWLDPPTHVTGFYLLDALLEGNGEVFFN) the chain is on the cytoplasmic side. A helical transmembrane segment spans residues 200 to 220 (ALQHLILPALTLAFVHLGIVA). Topologically, residues 221–246 (RQIRSAMLEQLSEDYIRTARASGLPG) are periplasmic. Residues 247–269 (WYIVLCYALPNALIPSITVLGLA) traverse the membrane as a helical segment. Topologically, residues 270–279 (LGDLLYGAVL) are cytoplasmic. A helical transmembrane segment spans residues 280 to 300 (TETVFAWPGMGAWVVTSIQAL). Position 301 (D301) is a topological domain, periplasmic. The helical transmembrane segment at 302–322 (FPAVMGFAVVVSFAYVLVNLV) threads the bilayer. The Cytoplasmic portion of the chain corresponds to 323–340 (VDLLYLWIDPRIGRGGGE).

The protein belongs to the binding-protein-dependent transport system permease family. OppBC subfamily. In terms of assembly, the complex is composed of two ATP-binding proteins (DdpD and DdpF), two transmembrane proteins (DdpB and DdpC) and a solute-binding protein (DdpA).

The protein resides in the cell inner membrane. In terms of biological role, part of the ABC transporter complex DdpABCDF, which is probably involved in D,D-dipeptide transport. Probably responsible for the translocation of the substrate across the membrane. This Escherichia coli (strain K12) protein is Probable D,D-dipeptide transport system permease protein DdpB (ddpB).